The primary structure comprises 513 residues: Flavonoid 3'-monooxygenase (513 aa).

The chain crosses the membrane as a helical span at residues 1–21 (MATLFLTILLATVLFLILRIF). The Cytoplasmic portion of the chain corresponds to 22–513 (SHRRNRSHNN…APNVYGLGSG (492 aa)). Cys-445 serves as a coordination point for heme.

Belongs to the cytochrome P450 family. Heme is required as a cofactor. As to expression, high expression in siliques and to a lower extent in stems, flowers and senescing leaves.

The protein localises to the endoplasmic reticulum membrane. It catalyses the reaction a 3'-unsubstituted flavone + reduced [NADPH--hemoprotein reductase] + O2 = a 3'-hydroxyflavone + oxidized [NADPH--hemoprotein reductase] + H2O + H(+). It participates in secondary metabolite biosynthesis; flavonoid biosynthesis. Its function is as follows. Catalyzes the 3'-hydroxylation of the flavonoid B-ring to the 3',4'-hydroxylated state. Convert naringenin to eriodictyol and dihydrokaempferol to dihydroquercetin. This is Flavonoid 3'-monooxygenase (CYP75B1) from Arabidopsis thaliana (Mouse-ear cress).